Consider the following 281-residue polypeptide: Pantothenate synthetase (281 aa).

30–37 (MGNLHQGH) is a binding site for ATP. Catalysis depends on H37, which acts as the Proton donor. Q61 contacts (R)-pantoate. Q61 provides a ligand contact to beta-alanine. 149 to 152 (GNKD) contributes to the ATP binding site. Residue Q155 participates in (R)-pantoate binding. ATP is bound by residues I178 and 186 to 189 (MSSR).

This sequence belongs to the pantothenate synthetase family. In terms of assembly, homodimer.

The protein resides in the cytoplasm. It catalyses the reaction (R)-pantoate + beta-alanine + ATP = (R)-pantothenate + AMP + diphosphate + H(+). It functions in the pathway cofactor biosynthesis; (R)-pantothenate biosynthesis; (R)-pantothenate from (R)-pantoate and beta-alanine: step 1/1. Its function is as follows. Catalyzes the condensation of pantoate with beta-alanine in an ATP-dependent reaction via a pantoyl-adenylate intermediate. The protein is Pantothenate synthetase of Shewanella sp. (strain ANA-3).